Reading from the N-terminus, the 88-residue chain is Small ribosomal subunit protein bS20 (88 aa).

Residues 1–23 (MANSPQAKKRARQNDKARAHNAS) are disordered.

This sequence belongs to the bacterial ribosomal protein bS20 family.

In terms of biological role, binds directly to 16S ribosomal RNA. In Teredinibacter turnerae (strain ATCC 39867 / T7901), this protein is Small ribosomal subunit protein bS20.